Here is a 108-residue protein sequence, read N- to C-terminus: Transmembrane protein 141 (108 aa).

The next 2 membrane-spanning stretches (helical) occupy residues 32–52 (MKGV…QMFI) and 58–78 (YPLQ…SYGV).

The protein belongs to the TMEM141 family.

The protein localises to the membrane. This Homo sapiens (Human) protein is Transmembrane protein 141 (TMEM141).